Here is a 695-residue protein sequence, read N- to C-terminus: UvrABC system protein B (695 aa).

The region spanning 25–176 (KSISEGHRFQ…NQRDVLRDLA (152 aa)) is the Helicase ATP-binding domain. Residue 38–45 (GATGTGKT) coordinates ATP. A Beta-hairpin motif is present at residues 91–114 (YYDYYQPEAYVPSTDTYIAKSSSI). Positions 454–617 (LLGEIYLRLE…ITPKPIVKKN (164 aa)) constitute a Helicase C-terminal domain. The region spanning 652–687 (PELIGQLELKMKEAAKNLEFEEAAQLRDRIKKLRQR) is the UVR domain.

Belongs to the UvrB family. Forms a heterotetramer with UvrA during the search for lesions. Interacts with UvrC in an incision complex.

The protein localises to the cytoplasm. Functionally, the UvrABC repair system catalyzes the recognition and processing of DNA lesions. A damage recognition complex composed of 2 UvrA and 2 UvrB subunits scans DNA for abnormalities. Upon binding of the UvrA(2)B(2) complex to a putative damaged site, the DNA wraps around one UvrB monomer. DNA wrap is dependent on ATP binding by UvrB and probably causes local melting of the DNA helix, facilitating insertion of UvrB beta-hairpin between the DNA strands. Then UvrB probes one DNA strand for the presence of a lesion. If a lesion is found the UvrA subunits dissociate and the UvrB-DNA preincision complex is formed. This complex is subsequently bound by UvrC and the second UvrB is released. If no lesion is found, the DNA wraps around the other UvrB subunit that will check the other stand for damage. The chain is UvrABC system protein B from Synechococcus sp. (strain JA-2-3B'a(2-13)) (Cyanobacteria bacterium Yellowstone B-Prime).